Reading from the N-terminus, the 173-residue chain is Regulatory protein RecX (173 aa).

This sequence belongs to the RecX family.

The protein resides in the cytoplasm. Modulates RecA activity. The sequence is that of Regulatory protein RecX from Mycobacterium marinum (strain ATCC BAA-535 / M).